The following is a 169-amino-acid chain: Nucleoside diphosphate kinase 3 (169 aa).

ADP is bound by residues lysine 29, arginine 105, threonine 111, arginine 122, valine 129, and asparagine 132. Catalysis depends on histidine 135, which acts as the Pros-phosphohistidine intermediate.

It belongs to the NDK family. As to quaternary structure, homohexamer. Mg(2+) serves as cofactor.

It is found in the mitochondrion outer membrane. It localises to the cytoplasm. The protein resides in the cytoskeleton. Its subcellular location is the cilium basal body. It catalyses the reaction a 2'-deoxyribonucleoside 5'-diphosphate + ATP = a 2'-deoxyribonucleoside 5'-triphosphate + ADP. The catalysed reaction is a ribonucleoside 5'-diphosphate + ATP = a ribonucleoside 5'-triphosphate + ADP. Functionally, catalyzes the phosphorylation of ribonucleosides and deoxyribonucleoside diphosphates, other than ATP, into the corresponding triphosphates with ATP as the major phosphate donor. The ATP gamma phosphate is transferred to the nucleoside diphosphate beta phosphate via a ping-pong mechanism, using a phosphorylated active-site intermediate. Through the catalyzed exchange of gamma-phosphate between di- and triphosphonucleosides participates in regulation of intracellular nucleotide homeostasis. Required for ciliary function during renal development. Independently of its kinase activity, facilitates mitochondrial tethering prior to membrane fusion through its direct membrane-binding and hexamerization. Implicated in repair of both single- and double-stranded breaks in DNA, independently of its kinase activity. This is Nucleoside diphosphate kinase 3 from Danio rerio (Zebrafish).